Consider the following 207-residue polypeptide: Holliday junction branch migration complex subunit RuvA (207 aa).

A domain I region spans residues 1–64 (MIGLINGQVQ…EDAQLLYGFI (64 aa)). Residues 65-143 (DRKERDVFRQ…NIEVDSSHLE (79 aa)) are domain II. A flexible linker region spans residues 144–152 (FAMQPAPIS). The domain III stretch occupies residues 153–207 (AEGSIIAEVEGALISLGYKEREAQQAIKAAKSNGETFADTQSLLKATLQQFQSFK).

It belongs to the RuvA family. Homotetramer. Forms an RuvA(8)-RuvB(12)-Holliday junction (HJ) complex. HJ DNA is sandwiched between 2 RuvA tetramers; dsDNA enters through RuvA and exits via RuvB. An RuvB hexamer assembles on each DNA strand where it exits the tetramer. Each RuvB hexamer is contacted by two RuvA subunits (via domain III) on 2 adjacent RuvB subunits; this complex drives branch migration. In the full resolvosome a probable DNA-RuvA(4)-RuvB(12)-RuvC(2) complex forms which resolves the HJ.

The protein resides in the cytoplasm. Functionally, the RuvA-RuvB-RuvC complex processes Holliday junction (HJ) DNA during genetic recombination and DNA repair, while the RuvA-RuvB complex plays an important role in the rescue of blocked DNA replication forks via replication fork reversal (RFR). RuvA specifically binds to HJ cruciform DNA, conferring on it an open structure. The RuvB hexamer acts as an ATP-dependent pump, pulling dsDNA into and through the RuvAB complex. HJ branch migration allows RuvC to scan DNA until it finds its consensus sequence, where it cleaves and resolves the cruciform DNA. This is Holliday junction branch migration complex subunit RuvA from Psychrobacter cryohalolentis (strain ATCC BAA-1226 / DSM 17306 / VKM B-2378 / K5).